Consider the following 853-residue polypeptide: DNA mismatch repair protein MutS (853 aa).

An ATP-binding site is contributed by 614-621 (GPNMGGKS).

It belongs to the DNA mismatch repair MutS family.

In terms of biological role, this protein is involved in the repair of mismatches in DNA. It is possible that it carries out the mismatch recognition step. This protein has a weak ATPase activity. This Escherichia coli (strain 55989 / EAEC) protein is DNA mismatch repair protein MutS.